A 281-amino-acid chain; its full sequence is Fructose-bisphosphate aldolase class 1 (281 aa).

The Schiff-base intermediate with dihydroxyacetone-P role is filled by Lys191.

This sequence belongs to the DeoC/FbaB aldolase family. In terms of assembly, homooctamer.

The protein resides in the cytoplasm. The catalysed reaction is beta-D-fructose 1,6-bisphosphate = D-glyceraldehyde 3-phosphate + dihydroxyacetone phosphate. With respect to regulation, activated by citrate. The chain is Fructose-bisphosphate aldolase class 1 (fba) from Pyrococcus abyssi (strain GE5 / Orsay).